The sequence spans 316 residues: Pantothenate kinase (316 aa).

An ATP-binding site is contributed by 95 to 102; it reads GSVAVGKS.

This sequence belongs to the prokaryotic pantothenate kinase family.

The protein resides in the cytoplasm. The enzyme catalyses (R)-pantothenate + ATP = (R)-4'-phosphopantothenate + ADP + H(+). Its pathway is cofactor biosynthesis; coenzyme A biosynthesis; CoA from (R)-pantothenate: step 1/5. This chain is Pantothenate kinase, found in Shewanella sediminis (strain HAW-EB3).